Consider the following 192-residue polypeptide: Zinc finger CCHC domain-containing protein 10 (192 aa).

The CCHC-type zinc finger occupies 43 to 60 (VRCQKCLEFGHWTYECTG). A disordered region spans residues 89 to 192 (QSIGETNVER…DEPPKKKKKK (104 aa)). 2 stretches are compositionally biased toward low complexity: residues 109-136 (TSSS…SSSS) and 144-179 (SSSS…STDS).

The polypeptide is Zinc finger CCHC domain-containing protein 10 (ZCCHC10) (Homo sapiens (Human)).